Consider the following 159-residue polypeptide: Trafficking protein particle complex subunit 6A (159 aa).

Phosphoserine is present on Ser-33.

The protein belongs to the TRAPP small subunits family. BET3 subfamily. In terms of assembly, part of the multisubunit transport protein particle (TRAPP) complex. Heterodimer with TRAPPC3. The heterodimer TRAPPC3-TRAPPC6A interacts with TRAPPC2L. Interacts with TRAPPC2L.

It is found in the golgi apparatus. Its subcellular location is the cis-Golgi network. The protein localises to the endoplasmic reticulum. In terms of biological role, may play a role in vesicular transport during the biogenesis of melanosomes. This is Trafficking protein particle complex subunit 6A from Bos taurus (Bovine).